Consider the following 430-residue polypeptide: Dihydrolipoyllysine-residue acetyltransferase component of pyruvate dehydrogenase complex (430 aa).

The region spanning 2–77 is the Lipoyl-binding domain; it reads AFEFRLPDIG…VVGDVIVKID (76 aa). The residue at position 43 (K43) is an N6-lipoyllysine. The disordered stretch occupies residues 80 to 122; the sequence is DAEDMQFKGHDDDSSSKEEPAKEEAPAEQAPVATQTEEVDENR. Residues 84–104 are compositionally biased toward basic and acidic residues; that stretch reads MQFKGHDDDSSSKEEPAKEEA. One can recognise a Peripheral subunit-binding (PSBD) domain in the interval 125 to 162; it reads KAMPSVRKYAREKGVNIKAVSGSGKNGRITKEDVDAYL. Residues 165–200 form a disordered region; it reads GAPTASNESAASATSEEVAETPAAPAAVTLEGDFPE. The segment covering 166-193 has biased composition (low complexity); the sequence is APTASNESAASATSEEVAETPAAPAAVT. H401 is an active-site residue.

It belongs to the 2-oxoacid dehydrogenase family. As to quaternary structure, forms a 24-polypeptide structural core with octahedral symmetry. (R)-lipoate serves as cofactor.

The catalysed reaction is N(6)-[(R)-dihydrolipoyl]-L-lysyl-[protein] + acetyl-CoA = N(6)-[(R)-S(8)-acetyldihydrolipoyl]-L-lysyl-[protein] + CoA. The pyruvate dehydrogenase complex catalyzes the overall conversion of pyruvate to acetyl-CoA and CO(2). It contains multiple copies of three enzymatic components: pyruvate dehydrogenase (E1), dihydrolipoamide acetyltransferase (E2) and lipoamide dehydrogenase (E3). In Staphylococcus aureus (strain COL), this protein is Dihydrolipoyllysine-residue acetyltransferase component of pyruvate dehydrogenase complex (pdhC).